Here is a 465-residue protein sequence, read N- to C-terminus: Ribulose bisphosphate carboxylase large chain (465 aa).

The residue at position 4 (Lys4) is an N6,N6,N6-trimethyllysine. Residues Asn113 and Thr163 each coordinate substrate. The active-site Proton acceptor is the Lys165. Lys167 serves as a coordination point for substrate. 3 residues coordinate Mg(2+): Lys191, Asp193, and Glu194. The residue at position 191 (Lys191) is an N6-carboxylysine. Residue His284 is the Proton acceptor of the active site. Positions 285, 317, and 369 each coordinate substrate.

The protein belongs to the RuBisCO large chain family. Type I subfamily. Heterohexadecamer of 8 large chains and 8 small chains; disulfide-linked. The disulfide link is formed within the large subunit homodimers. It depends on Mg(2+) as a cofactor. In terms of processing, the disulfide bond which can form in the large chain dimeric partners within the hexadecamer appears to be associated with oxidative stress and protein turnover.

The protein localises to the plastid. It is found in the chloroplast. The enzyme catalyses 2 (2R)-3-phosphoglycerate + 2 H(+) = D-ribulose 1,5-bisphosphate + CO2 + H2O. It catalyses the reaction D-ribulose 1,5-bisphosphate + O2 = 2-phosphoglycolate + (2R)-3-phosphoglycerate + 2 H(+). In terms of biological role, ruBisCO catalyzes two reactions: the carboxylation of D-ribulose 1,5-bisphosphate, the primary event in carbon dioxide fixation, as well as the oxidative fragmentation of the pentose substrate in the photorespiration process. Both reactions occur simultaneously and in competition at the same active site. This Fragaria ananassa (Strawberry) protein is Ribulose bisphosphate carboxylase large chain.